We begin with the raw amino-acid sequence, 277 residues long: Multiple sugar-binding transport system permease protein MsmG (277 aa).

6 helical membrane passes run tyrosine 13 to serine 33, valine 74 to isoleucine 94, leucine 110 to methionine 130, leucine 141 to isoleucine 161, threonine 198 to leucine 218, and glycine 243 to phenylalanine 263. An ABC transmembrane type-1 domain is found at phenylalanine 69–phenylalanine 263.

Belongs to the binding-protein-dependent transport system permease family. MalFG subfamily.

The protein resides in the cell membrane. Its function is as follows. Involved in a binding protein-dependent transport system responsible for the uptake of melibiose, raffinose and isomaltotriose. The protein is Multiple sugar-binding transport system permease protein MsmG (msmG) of Streptococcus mutans serotype c (strain ATCC 700610 / UA159).